Consider the following 285-residue polypeptide: Sulfotransferase 2A1 (285 aa).

Residues Lys-44, Ser-45, Gly-46, Thr-47, Asn-48, and Trp-49 each contribute to the 3'-phosphoadenylyl sulfate site. The Proton acceptor role is filled by His-99. 8 residues coordinate 3'-phosphoadenylyl sulfate: Arg-121, Ser-129, Tyr-184, Ser-218, Met-223, Arg-247, Lys-248, and Gly-249.

The protein belongs to the sulfotransferase 1 family. Homodimer. Highly expressed in liver.

The protein localises to the cytoplasm. The enzyme catalyses an alcohol + 3'-phosphoadenylyl sulfate = an alkyl sulfate + adenosine 3',5'-bisphosphate + H(+). The catalysed reaction is taurolithocholate + 3'-phosphoadenylyl sulfate = taurolithocholate 3-sulfate + adenosine 3',5'-bisphosphate + H(+). It carries out the reaction pregnenolone + 3'-phosphoadenylyl sulfate = pregnenolone sulfate + adenosine 3',5'-bisphosphate + H(+). It catalyses the reaction 3beta-hydroxyandrost-5-en-17-one + 3'-phosphoadenylyl sulfate = dehydroepiandrosterone 3-sulfate + adenosine 3',5'-bisphosphate + H(+). The enzyme catalyses lithocholate + 3'-phosphoadenylyl sulfate = lithocholate sulfate + adenosine 3',5'-bisphosphate + H(+). The catalysed reaction is (24S)-hydroxycholesterol + 3'-phosphoadenylyl sulfate = (24S)-hydroxycholesterol 24-sulfate + adenosine 3',5'-bisphosphate + H(+). It carries out the reaction (24S)-hydroxycholesterol + 3'-phosphoadenylyl sulfate = (24S)-hydroxycholesterol 3-sulfate + adenosine 3',5'-bisphosphate + H(+). It catalyses the reaction (24S)-hydroxycholesterol 24-sulfate + 3'-phosphoadenylyl sulfate = (24S)-hydroxycholesterol 3,24-disulfate + adenosine 3',5'-bisphosphate + H(+). The enzyme catalyses androsterone + 3'-phosphoadenylyl sulfate = androsterone 3alpha-sulfate + adenosine 3',5'-bisphosphate + H(+). In terms of biological role, sulfotransferase that utilizes 3'-phospho-5'-adenylyl sulfate (PAPS) as sulfonate donor to catalyze the sulfonation of steroids and bile acids in the liver and adrenal glands. Mediates the sulfation of a wide range of steroids and sterols, including pregnenolone, androsterone, DHEA, bile acids, cholesterol and as well many xenobiotics that contain alcohol and phenol functional groups. Sulfonation increases the water solubility of most compounds, and therefore their renal excretion, but it can also result in bioactivation to form active metabolites. Plays an important role in maintening steroid and lipid homeostasis. Plays a key role in bile acid metabolism. In addition, catalyzes the metabolic activation of potent carcinogenic polycyclic arylmethanols. The sequence is that of Sulfotransferase 2A1 (Sult2a1) from Mus musculus (Mouse).